Here is a 54-residue protein sequence, read N- to C-terminus: Preprotein translocase subunit SecG (54 aa).

The Cytoplasmic portion of the chain corresponds to 1–31 (MSSGQNSGGLMSSAGLVRYFDAEDRNSIRID). The helical transmembrane segment at 32–53 (PKTIVAFGVLFGVGVLVLNALA) threads the bilayer. Isoleucine 54 is a topological domain (extracellular).

It belongs to the SEC61-beta family. As to quaternary structure, component of the protein translocase complex. Heterotrimer consisting of alpha (SecY), beta (SecG) and gamma (SecE) subunits. Can form oligomers of the heterotrimer.

The protein localises to the cell membrane. Its function is as follows. Involved in protein export. The function of the beta subunit is unknown, but it may be involved in stabilization of the trimeric complex. This chain is Preprotein translocase subunit SecG, found in Haloquadratum walsbyi (strain DSM 16790 / HBSQ001).